A 92-amino-acid polypeptide reads, in one-letter code: Large ribosomal subunit protein eL43 (92 aa).

Zn(2+)-binding residues include Cys-39, Cys-42, Cys-57, and Cys-60. Residues 39-60 form a C4-type zinc finger; that stretch reads CSFCGKTKMKRKAVGIWHCGSC.

This sequence belongs to the eukaryotic ribosomal protein eL43 family. As to quaternary structure, component of the large ribosomal subunit.

The protein resides in the cytoplasm. Functionally, component of the large ribosomal subunit. The ribosome is a large ribonucleoprotein complex responsible for the synthesis of proteins in the cell. In Gallus gallus (Chicken), this protein is Large ribosomal subunit protein eL43 (RPL37A).